A 294-amino-acid polypeptide reads, in one-letter code: 4-hydroxy-tetrahydrodipicolinate synthase (294 aa).

T45 contributes to the pyruvate binding site. Catalysis depends on Y133, which acts as the Proton donor/acceptor. K161 serves as the catalytic Schiff-base intermediate with substrate. A pyruvate-binding site is contributed by I203.

The protein belongs to the DapA family. In terms of assembly, homotetramer; dimer of dimers.

The protein localises to the cytoplasm. The enzyme catalyses L-aspartate 4-semialdehyde + pyruvate = (2S,4S)-4-hydroxy-2,3,4,5-tetrahydrodipicolinate + H2O + H(+). It participates in amino-acid biosynthesis; L-lysine biosynthesis via DAP pathway; (S)-tetrahydrodipicolinate from L-aspartate: step 3/4. Functionally, catalyzes the condensation of (S)-aspartate-beta-semialdehyde [(S)-ASA] and pyruvate to 4-hydroxy-tetrahydrodipicolinate (HTPA). The sequence is that of 4-hydroxy-tetrahydrodipicolinate synthase from Shewanella frigidimarina (strain NCIMB 400).